The following is a 301-amino-acid chain: E3 ubiquitin-protein ligase RNF144B (301 aa).

The TRIAD supradomain stretch occupies residues 26 to 242; it reads PLVTCKLCLC…YDKGPCRNKL (217 aa). 14 residues coordinate Zn(2+): cysteine 30, cysteine 33, cysteine 53, cysteine 56, cysteine 121, cysteine 126, cysteine 145, cysteine 148, cysteine 153, cysteine 156, histidine 161, cysteine 166, cysteine 191, and cysteine 194. Residues 30–80 form an RING-type 1 zinc finger; that stretch reads CKLCLCEQSLDKMTMLQECQCIFCTPCLKQYMVLSIREGCGSPITCPDMVC. The IBR-type zinc-finger motif lies at 101-166; it reads QLYQRLKFER…KDAWHEESSC (66 aa). Residues 191-220 form an RING-type 2; atypical zinc finger; it reads CPVCRIYIERNEGCAQMMCKNCKHTFCWYC. Cysteine 204 is an active-site residue. Zn(2+) is bound by residues cysteine 209, cysteine 212, cysteine 217, cysteine 220, histidine 232, and cysteine 238. A helical transmembrane segment spans residues 256–276; the sequence is VVGILVGLGVIALVTSPLLLL.

This sequence belongs to the RBR family. RNF144 subfamily. As to quaternary structure, interacts with UBE2L3, UBE2L6 and LCMT2, as well as with BAX. Interacts with TBK1; this interaction inhibits TBK1 phosphorylation and 'Lys-63'-linked polyubiquitination. Auto-ubiquitinated.

The protein localises to the mitochondrion membrane. The protein resides in the cytoplasm. The enzyme catalyses [E2 ubiquitin-conjugating enzyme]-S-ubiquitinyl-L-cysteine + [acceptor protein]-L-lysine = [E2 ubiquitin-conjugating enzyme]-L-cysteine + [acceptor protein]-N(6)-ubiquitinyl-L-lysine.. It participates in protein modification; protein ubiquitination. E3 ubiquitin-protein ligase which accepts ubiquitin from E2 ubiquitin-conjugating enzymes UBE2L3 and UBE2L6 in the form of a thioester and then directly transfers the ubiquitin to targeted substrates such as LCMT2, thereby promoting their degradation. Induces apoptosis via a p53/TP53-dependent but caspase-independent mechanism. Plays a crucial role in maintaining the genomic stability by controlling the degradation of multiple proteins involved in mitotic progression and DNA damage. Regulates epithelial homeostasis by mediating degradation of CDKN1A and isoform 2 of TP63. Plays a regulatory role in innate immunity by negatively regulating IRF3 activation and IFN-beta production. Mechanistically, inhibits TBK1 phosphorylation and 'Lys-63'-linked polyubiquitination independently of its E3 ligase activity. Alternatively, promotes 'Lys-27' and 'Lys-33'-linked ubiquitination of IFIH1/MDA5, promoting selective autophagic degradation of IFIH1/MDA5 to inhibit antiviral response. This is E3 ubiquitin-protein ligase RNF144B (Rnf144b) from Mus musculus (Mouse).